Here is a 286-residue protein sequence, read N- to C-terminus: MYLFRIISLNLSGVFLFLSYTPLYITYLLGVVISSMMLTVGTFAITLDIILCILVVCFLITTLLVIDSVLDSIRGLNSVGVLVRIIQYCFLWFVFSEFMLFVVFFYTLYSECLLINVEFTNIGCPVTTKYSNIILDLGYIFYWFLFDFFNIILNTVYLFISGLCCNNVLSSILCREYLLSKIILGSSIFLGLLFIWNQVWEFNILIITLSVNIFCTILFSIDTLHFMHVLVGIVFMIISIFNIQSKKIGDIRIVLIVCIIFYWHFVDIVWFFLLRFIYLDTLMVLK.

The next 8 membrane-spanning stretches (helical) occupy residues 13-33 (GVFL…GVVI), 40-60 (VGTF…CFLI), 85-105 (IIQY…VVFF), 133-153 (IILD…NIIL), 173-195 (LCRE…LLFI), 199-221 (VWEF…LFSI), 223-243 (TLHF…IFNI), and 253-273 (IVLI…WFFL).

This sequence belongs to the cytochrome c oxidase subunit 3 family. In terms of assembly, component of the cytochrome c oxidase (complex IV, CIV), a multisubunit enzyme composed of a catalytic core of 3 subunits and several supernumerary subunits. The complex exists as a monomer or a dimer and forms supercomplexes (SCs) in the inner mitochondrial membrane with ubiquinol-cytochrome c oxidoreductase (cytochrome b-c1 complex, complex III, CIII).

Its subcellular location is the mitochondrion inner membrane. The catalysed reaction is 4 Fe(II)-[cytochrome c] + O2 + 8 H(+)(in) = 4 Fe(III)-[cytochrome c] + 2 H2O + 4 H(+)(out). Its function is as follows. Component of the cytochrome c oxidase, the last enzyme in the mitochondrial electron transport chain which drives oxidative phosphorylation. The respiratory chain contains 3 multisubunit complexes succinate dehydrogenase (complex II, CII), ubiquinol-cytochrome c oxidoreductase (cytochrome b-c1 complex, complex III, CIII) and cytochrome c oxidase (complex IV, CIV), that cooperate to transfer electrons derived from NADH and succinate to molecular oxygen, creating an electrochemical gradient over the inner membrane that drives transmembrane transport and the ATP synthase. Cytochrome c oxidase is the component of the respiratory chain that catalyzes the reduction of oxygen to water. Electrons originating from reduced cytochrome c in the intermembrane space (IMS) are transferred via the dinuclear copper A center (CU(A)) of subunit 2 and heme A of subunit 1 to the active site in subunit 1, a binuclear center (BNC) formed by heme A3 and copper B (CU(B)). The BNC reduces molecular oxygen to 2 water molecules using 4 electrons from cytochrome c in the IMS and 4 protons from the mitochondrial matrix. This chain is Cytochrome c oxidase subunit 3 (COIII), found in Trypanoplasma borreli.